Here is a 611-residue protein sequence, read N- to C-terminus: MAGPDRKPVSSAAATTPAPSAPVVLPKTSESSQLLKIRHSMSHVMAMAVQQLFPKARVTIGPWTESGFYYDFDNPDPFTEADLKAIKKGMIKIINKKVPLERVEVTRAEAETKIKAQNEPYKLEILEGLQDPITLYTLGEDWWDLCAGPHVEHTGQLNAKAFELESVAGAYWRGDETKAQLHRIYGTAWETPEQLAEHKRRKEEALRRDHRRIGKDLDLFSIEDEAGAGLVFWHPRGARMRLLIEEFWRQAHFEGGYELLYTPHVADISLWKTSGHLDFYAESMFGPMEVDEREYQLKPMNCPFHVLTYASKLRSYRELPIRWAELGTVYRYERPGVMHGLMRVRGFTQDDAHVFCLPEQISDEILKILDLTERILSTFDFNTYEINLSTRPEKSIGDDAVWDLATKGLIEALERKGWKYKIDEGGGAFYGPKIDLKIEDAIGRMWQCSTIQLDFNLPERFKLDYVAADGSKQRPIMIHRAIFGSLERFFGIMTENYAGDYPFWLAPEQVRLLPVTDEVQPYAESLLDQLTQAGVRATIDRSGDRLGKLIRTGEQMKIPVLAVIGAKEAEQNAVSLRSRRDGDLGVAAVADLLRAAESANSQRAAGLGLNG.

The interval 1–25 is disordered; it reads MAGPDRKPVSSAAATTPAPSAPVVL. Residues 9-24 show a composition bias toward low complexity; that stretch reads VSSAAATTPAPSAPVV. Residues 209–502 form a catalytic region; that stretch reads DHRRIGKDLD…MTENYAGDYP (294 aa). Residues Cys-302, His-353, and His-479 each coordinate Zn(2+).

Belongs to the class-II aminoacyl-tRNA synthetase family. Homodimer. Requires Zn(2+) as cofactor.

It localises to the cytoplasm. The enzyme catalyses tRNA(Thr) + L-threonine + ATP = L-threonyl-tRNA(Thr) + AMP + diphosphate + H(+). Catalyzes the attachment of threonine to tRNA(Thr) in a two-step reaction: L-threonine is first activated by ATP to form Thr-AMP and then transferred to the acceptor end of tRNA(Thr). Also edits incorrectly charged L-seryl-tRNA(Thr). This Parasynechococcus marenigrum (strain WH8102) protein is Threonine--tRNA ligase.